A 245-amino-acid polypeptide reads, in one-letter code: Small ribosomal subunit protein uS3 (245 aa).

One can recognise a KH type-2 domain in the interval 38 to 106 (IRKYLNTRLA…EVQINIFEIK (69 aa)). The segment at 225–245 (YEGSGDKSVKRRKRNGIKKNE) is disordered. A compositionally biased stretch (basic residues) spans 233-245 (VKRRKRNGIKKNE).

It belongs to the universal ribosomal protein uS3 family. As to quaternary structure, part of the 30S ribosomal subunit. Forms a tight complex with proteins S10 and S14.

Its function is as follows. Binds the lower part of the 30S subunit head. Binds mRNA in the 70S ribosome, positioning it for translation. This chain is Small ribosomal subunit protein uS3, found in Azobacteroides pseudotrichonymphae genomovar. CFP2.